Consider the following 93-residue polypeptide: DNA-directed RNA polymerase subunit omega (93 aa).

It belongs to the RNA polymerase subunit omega family. The RNAP catalytic core consists of 2 alpha, 1 beta, 1 beta' and 1 omega subunit. When a sigma factor is associated with the core the holoenzyme is formed, which can initiate transcription.

The enzyme catalyses RNA(n) + a ribonucleoside 5'-triphosphate = RNA(n+1) + diphosphate. Its function is as follows. Promotes RNA polymerase assembly. Latches the N- and C-terminal regions of the beta' subunit thereby facilitating its interaction with the beta and alpha subunits. In Shewanella piezotolerans (strain WP3 / JCM 13877), this protein is DNA-directed RNA polymerase subunit omega.